The primary structure comprises 188 residues: EP300-interacting inhibitor of differentiation 1 (188 aa).

Residues 1 to 122 are disordered; the sequence is MSEMAELSEL…PEEEQLSGAG (122 aa). 2 stretches are compositionally biased toward acidic residues: residues 53-64 and 94-117; these read LEEEGPMEEEEA and FESE…EEEQ. The tract at residues 55-121 is interaction with NR0B2; the sequence is EEGPMEEEEA…YPEEEQLSGA (67 aa). Positions 179–183 match the LXCXE motif motif; that stretch reads LGCDE.

Interacts via its LXCXE motif with the entire pocket region of RB1. Interacts with EP300, NR0B2 and TRIM27.

It is found in the nucleus. Its subcellular location is the cytoplasm. Interacts with RB1 and EP300 and acts as a repressor of MYOD1 transactivation. Inhibits EP300 and CBP histone acetyltransferase activity. May be involved in coupling cell cycle exit to the transcriptional activation of genes required for cellular differentiation. May act as a candidate coinhibitory factor for NR0B2 that can be directly linked to transcription inhibitory mechanisms. The chain is EP300-interacting inhibitor of differentiation 1 from Pongo abelii (Sumatran orangutan).